Reading from the N-terminus, the 388-residue chain is Succinate--CoA ligase [ADP-forming] subunit beta (388 aa).

An ATP-grasp domain is found at 9–244; it reads KQLFARYGLP…QSQEDPREAQ (236 aa). Residues lysine 46, 53–55, glutamate 99, threonine 102, and glutamate 107 each bind ATP; that span reads GRG. Positions 199 and 213 each coordinate Mg(2+). Substrate-binding positions include asparagine 264 and 321–323; that span reads GIV.

The protein belongs to the succinate/malate CoA ligase beta subunit family. As to quaternary structure, heterotetramer of two alpha and two beta subunits. Mg(2+) is required as a cofactor.

It carries out the reaction succinate + ATP + CoA = succinyl-CoA + ADP + phosphate. The catalysed reaction is GTP + succinate + CoA = succinyl-CoA + GDP + phosphate. The protein operates within carbohydrate metabolism; tricarboxylic acid cycle; succinate from succinyl-CoA (ligase route): step 1/1. Its function is as follows. Succinyl-CoA synthetase functions in the citric acid cycle (TCA), coupling the hydrolysis of succinyl-CoA to the synthesis of either ATP or GTP and thus represents the only step of substrate-level phosphorylation in the TCA. The beta subunit provides nucleotide specificity of the enzyme and binds the substrate succinate, while the binding sites for coenzyme A and phosphate are found in the alpha subunit. In Shigella boydii serotype 18 (strain CDC 3083-94 / BS512), this protein is Succinate--CoA ligase [ADP-forming] subunit beta.